A 353-amino-acid polypeptide reads, in one-letter code: UDP-N-acetylglucosamine--N-acetylmuramyl-(pentapeptide) pyrophosphoryl-undecaprenol N-acetylglucosamine transferase (353 aa).

UDP-N-acetyl-alpha-D-glucosamine-binding positions include 10–12, Asn-124, Ser-183, and Gln-283; that span reads TGG.

The protein belongs to the glycosyltransferase 28 family. MurG subfamily.

The protein resides in the cell inner membrane. It catalyses the reaction di-trans,octa-cis-undecaprenyl diphospho-N-acetyl-alpha-D-muramoyl-L-alanyl-D-glutamyl-meso-2,6-diaminopimeloyl-D-alanyl-D-alanine + UDP-N-acetyl-alpha-D-glucosamine = di-trans,octa-cis-undecaprenyl diphospho-[N-acetyl-alpha-D-glucosaminyl-(1-&gt;4)]-N-acetyl-alpha-D-muramoyl-L-alanyl-D-glutamyl-meso-2,6-diaminopimeloyl-D-alanyl-D-alanine + UDP + H(+). Its pathway is cell wall biogenesis; peptidoglycan biosynthesis. In terms of biological role, cell wall formation. Catalyzes the transfer of a GlcNAc subunit on undecaprenyl-pyrophosphoryl-MurNAc-pentapeptide (lipid intermediate I) to form undecaprenyl-pyrophosphoryl-MurNAc-(pentapeptide)GlcNAc (lipid intermediate II). This is UDP-N-acetylglucosamine--N-acetylmuramyl-(pentapeptide) pyrophosphoryl-undecaprenol N-acetylglucosamine transferase from Helicobacter pylori (strain ATCC 700392 / 26695) (Campylobacter pylori).